We begin with the raw amino-acid sequence, 240 residues long: Protein FANTASTIC FOUR 2 (240 aa).

2 disordered regions span residues 89–124 (TTPRAPPRQLKPQEDTNLPDKTPPMSRNNSFPPPIK) and 177–229 (LLSH…KPML). In terms of domain architecture, FAF spans 117–171 (NSFPPPIKFVEDSKYNRMVRWLGEDGRIVVQAIRVSSPPSCFVSERGEGRLRLIL). The span at 184–200 (EEEEEETEEGIDEETSE) shows a compositional bias: acidic residues. Residues 207-216 (GNKKFSRFSR) show a composition bias toward basic residues. Residues 217-226 (RCKENGREPK) show a composition bias toward basic and acidic residues.

Belongs to the fantastic four family. In terms of tissue distribution, expressed in the shoot apex, stamens, carpels and young siliques. Detected in provascular and vascular tissue, and in the center of the vegetative and inflorescence meristems. Expressed in the funiculus. In roots and leaves, predominantly expressed in phloem.

Its function is as follows. Regulates the size of the shoot meristem by modulating the CLV3-WUS feedback loop. Can repress WUS but is under negative control by CLV3. The chain is Protein FANTASTIC FOUR 2 (FAF2) from Arabidopsis thaliana (Mouse-ear cress).